The following is a 279-amino-acid chain: Putative biopolymer transport protein ExbB homolog (279 aa).

3 helical membrane-spanning segments follow: residues 19–39 (SGGVITYLIAAIGIYGFITAL), 126–146 (IIEVAPMLGLIGTVIGIWYTF), and 162–182 (IYVALITTILGLAVAIILMPL).

This sequence belongs to the ExbB/TolQ family.

Its subcellular location is the cell membrane. This is Putative biopolymer transport protein ExbB homolog from Methanothermobacter thermautotrophicus (strain ATCC 29096 / DSM 1053 / JCM 10044 / NBRC 100330 / Delta H) (Methanobacterium thermoautotrophicum).